Here is a 518-residue protein sequence, read N- to C-terminus: MADSTRPLLSDFNSSESNLPPPRSLEETIERCIGDFGWAQFLQAALVSFAWFFDAQQTFITVFTDSQPMWHCDNSDRVDSVCNTSSSNLCTLPNQTWSWDLNPHVSIISEWGLQCAGSFLKGFPASSFFLGCLIGGLALSTLADSSLGRKNMLLLSCLIMSLSSMLTAFSTSIWVYAFLRFLNGCGRATIGTCALVLSTELVGKKWRGQVGAMGFFCFTLGFLSLPMLGYINEGNSWRNLYVWTSIPTLIYCCLVRSFVRESPRWLIVKGRKEEAVSILQSIASNAITMSFTNLCFEVENDQSKSNPDVYDALKILVRKSWSFRRLLAAMVVGFGIGMVYYGMPLALTNLNFNLYLGVVFNALSEFPAFLITFFFIDKINRRDALIGFTALSGISSALIAVLGQQLGSLQIVLELVSFFSACTAFNMTLIYTIEMFPTCVRNSAISMVRQALVFGGVFSPVMVAAGRENQFWSYGLFGLIIGLCGLFVFGLPETRGSVLCDTMDEEEYKTLAKRQFIG.

Residues 1–23 (MADSTRPLLSDFNSSESNLPPPR) form a disordered region. Residues 1-32 (MADSTRPLLSDFNSSESNLPPPRSLEETIERC) lie on the Cytoplasmic side of the membrane. The helical transmembrane segment at 33 to 53 (IGDFGWAQFLQAALVSFAWFF) threads the bilayer. Residues 54-122 (DAQQTFITVF…LQCAGSFLKG (69 aa)) are Extracellular-facing. N-linked (GlcNAc...) asparagine glycosylation is found at Asn-83 and Asn-94. Residues 123–143 (FPASSFFLGCLIGGLALSTLA) form a helical membrane-spanning segment. Topologically, residues 144 to 157 (DSSLGRKNMLLLSC) are cytoplasmic. Residues 158–178 (LIMSLSSMLTAFSTSIWVYAF) traverse the membrane as a helical segment. At 179–180 (LR) the chain is on the extracellular side. A helical transmembrane segment spans residues 181 to 197 (FLNGCGRATIGTCALVL). Position 198–205 (198–205 (STELVGKK)) interacts with ATP. Residues 198-210 (STELVGKKWRGQV) lie on the Cytoplasmic side of the membrane. Residues 211-231 (GAMGFFCFTLGFLSLPMLGYI) traverse the membrane as a helical segment. Residues 232 to 239 (NEGNSWRN) lie on the Extracellular side of the membrane. A helical transmembrane segment spans residues 240 to 259 (LYVWTSIPTLIYCCLVRSFV). The Cytoplasmic segment spans residues 260-325 (RESPRWLIVK…LVRKSWSFRR (66 aa)). A helical membrane pass occupies residues 326 to 346 (LLAAMVVGFGIGMVYYGMPLA). The Extracellular portion of the chain corresponds to 347-355 (LTNLNFNLY). The chain crosses the membrane as a helical span at residues 356–376 (LGVVFNALSEFPAFLITFFFI). Residues 377-383 (DKINRRD) are Cytoplasmic-facing. The helical transmembrane segment at 384 to 404 (ALIGFTALSGISSALIAVLGQ) threads the bilayer. Residues 405 to 410 (QLGSLQ) lie on the Extracellular side of the membrane. Residues 411 to 431 (IVLELVSFFSACTAFNMTLIY) form a helical membrane-spanning segment. The Cytoplasmic segment spans residues 432–443 (TIEMFPTCVRNS). A helical transmembrane segment spans residues 444–464 (AISMVRQALVFGGVFSPVMVA). At 465-470 (AGRENQ) the chain is on the extracellular side. Residues 471–491 (FWSYGLFGLIIGLCGLFVFGL) form a helical membrane-spanning segment. Over 492–518 (PETRGSVLCDTMDEEEYKTLAKRQFIG) the chain is Cytoplasmic.

The protein belongs to the major facilitator (TC 2.A.1) superfamily. Organic cation transporter (TC 2.A.1.19) family. Mostly expressed in siliques, mainly in young seeds. Present in stems (cortical cells and parenchyma cells), at the basis of secondary inflorescences, and at the base of trichomes.

It is found in the vacuole membrane. Its function is as follows. High affinity carnitine transporter involved in the active cellular uptake of carnitine. Also transports organic cations. The sequence is that of Organic cation/carnitine transporter 3 (OCT3) from Arabidopsis thaliana (Mouse-ear cress).